The chain runs to 121 residues: MDLIRKIEAQNKKNEAFVFNVGDTVRVVYKIIEGSNERLQSFEGIVISFQNKGIGKTFLIRKISSGIGVEKIFPVYSPIIEKVEVLRRGKVRRAKLYYMRNRIGKAAMKIKERLTIKKVKH.

It belongs to the bacterial ribosomal protein bL19 family.

In terms of biological role, this protein is located at the 30S-50S ribosomal subunit interface and may play a role in the structure and function of the aminoacyl-tRNA binding site. The polypeptide is Large ribosomal subunit protein bL19 (rplS) (Borreliella burgdorferi (strain ATCC 35210 / DSM 4680 / CIP 102532 / B31) (Borrelia burgdorferi)).